The primary structure comprises 379 residues: EP300-interacting inhibitor of differentiation 3 (379 aa).

The stretch at 32-58 (LKQVEEEEEVEALKVEVAAASDTESDT) forms a coiled coil.

It belongs to the NSE4 family. In terms of assembly, component of the SMC5-SMC6 complex which consists at least of SMC5, SMC6, NSMCE2, NSMCE1, NSMCE4A or EID3 and NSMCE3. NSMCE1, NSMCE4A or EID3 and NSMCE3 probably form a subcomplex that bridges the head domains of the SMC5:SMC6 heterodimer. Homodimer, and heterodimer with EID2. Interacts with the C-terminal region of CREBBP.

Its subcellular location is the nucleus. It is found in the cytoplasm. It localises to the chromosome. The protein localises to the telomere. Tissue-specific component of the SMC5-SMC6 complex, a complex involved in repair of DNA double-strand breaks by homologous recombination. The complex may promote sister chromatid homologous recombination by recruiting the SMC1-SMC3 cohesin complex to double-strand breaks. The complex is required for telomere maintenance via recombination and mediates sumoylation of shelterin complex (telosome) components. Functionally, acts as a repressor of nuclear receptor-dependent transcription possibly by interfering with CREBBP-dependent coactivation. May function as a coinhibitor of other CREBBP/EP300-dependent transcription factors. This chain is EP300-interacting inhibitor of differentiation 3, found in Bos taurus (Bovine).